Consider the following 1377-residue polypeptide: DNA-directed RNA polymerase subunit beta' (1377 aa).

Zn(2+) is bound by residues Cys-60, Cys-62, Cys-75, and Cys-78. The Mg(2+) site is built by Asp-449, Asp-451, and Asp-453. Residues Cys-777, Cys-851, Cys-858, and Cys-861 each contribute to the Zn(2+) site.

Belongs to the RNA polymerase beta' chain family. The RNAP catalytic core consists of 2 alpha, 1 beta, 1 beta' and 1 omega subunit. When a sigma factor is associated with the core the holoenzyme is formed, which can initiate transcription. The cofactor is Mg(2+). Requires Zn(2+) as cofactor.

The catalysed reaction is RNA(n) + a ribonucleoside 5'-triphosphate = RNA(n+1) + diphosphate. Its function is as follows. DNA-dependent RNA polymerase catalyzes the transcription of DNA into RNA using the four ribonucleoside triphosphates as substrates. The chain is DNA-directed RNA polymerase subunit beta' from Borreliella burgdorferi (strain ZS7) (Borrelia burgdorferi).